We begin with the raw amino-acid sequence, 186 residues long: Elongation factor P (186 aa).

It belongs to the elongation factor P family.

It localises to the cytoplasm. The protein operates within protein biosynthesis; polypeptide chain elongation. In terms of biological role, involved in peptide bond synthesis. Stimulates efficient translation and peptide-bond synthesis on native or reconstituted 70S ribosomes in vitro. Probably functions indirectly by altering the affinity of the ribosome for aminoacyl-tRNA, thus increasing their reactivity as acceptors for peptidyl transferase. The chain is Elongation factor P from Shewanella frigidimarina (strain NCIMB 400).